Reading from the N-terminus, the 402-residue chain is Cysteine desulfurase NifS (402 aa).

Pyridoxal 5'-phosphate contacts are provided by residues 72–73 (GT), asparagine 151, glutamine 179, and 199–201 (CGH). Lysine 202 carries the N6-(pyridoxal phosphate)lysine modification. Position 237 (threonine 237) interacts with pyridoxal 5'-phosphate. Cysteine 325 serves as the catalytic Cysteine persulfide intermediate. Cysteine 325 is a binding site for [2Fe-2S] cluster.

This sequence belongs to the class-V pyridoxal-phosphate-dependent aminotransferase family. NifS/IscS subfamily. As to quaternary structure, homodimer. Requires pyridoxal 5'-phosphate as cofactor.

The catalysed reaction is (sulfur carrier)-H + L-cysteine = (sulfur carrier)-SH + L-alanine. Inhibited by equimolar concentrations of p-chloromercuribenzoic acid, iodoacetamide or N-ethylmaleimide. Its function is as follows. Catalyzes the removal of elemental sulfur atoms from cysteine to produce alanine. Seems to participate in the biosynthesis of the nitrogenase metalloclusters by providing the inorganic sulfur required for the Fe-S core formation. This chain is Cysteine desulfurase NifS, found in Azotobacter vinelandii.